The chain runs to 161 residues: uncharacterized protein (161 aa).

The next 4 membrane-spanning stretches (helical) occupy residues 22-42 (LFFI…VFGH), 43-63 (LTVG…ALLV), 89-109 (LAII…AGLG), and 110-130 (VVFG…LPVL). The segment at 141–161 (VATYSSNGQTGGSEGRSASDD) is disordered.

This sequence to M.leprae ML1138.

Its subcellular location is the cell membrane. This is an uncharacterized protein from Mycobacterium bovis (strain ATCC BAA-935 / AF2122/97).